Here is a 73-residue protein sequence, read N- to C-terminus: uncharacterized protein (73 aa).

This is an uncharacterized protein from Haemophilus influenzae (strain ATCC 51907 / DSM 11121 / KW20 / Rd).